Consider the following 60-residue polypeptide: MPVPKKKTSKARSRRRYAVWLGKAKLQAQRAMTIGRAILSGRNTGFYYPKAKSEEEEGEE.

This sequence belongs to the bacterial ribosomal protein bL32 family.

The chain is Large ribosomal subunit protein bL32 from Synechococcus sp. (strain JA-3-3Ab) (Cyanobacteria bacterium Yellowstone A-Prime).